A 2178-amino-acid polypeptide reads, in one-letter code: Genome polyprotein (2178 aa).

The disordered stretch occupies residues 1 to 20; it reads MGAQVSTQKSGSHENQNILT. Residue Gly2 is the site of N-myristoyl glycine; by host attachment. At 2–1490 the chain is on the cytoplasmic side; sequence GAQVSTQKSG…AVNQASMIIN (1489 aa). Residues 564–584 form an amphipathic alpha-helix region; the sequence is ALTEGLSDELEEVIVEKTKQT. Residues His875 and Asp893 each act as for protease 2A activity in the active site. Zn(2+) is bound by residues Cys910 and Cys912. Cys964 acts as the For protease 2A activity in catalysis. Zn(2+)-binding residues include Cys970 and His972. Residues 1100 to 1172 form a membrane-binding region; sequence NDGWFRKFND…HDSNPTQEKR (73 aa). Residues 1100 to 1238 are oligomerization; it reads NDGWFRKFND…TPGSGKSLTT (139 aa). The interval 1121–1125 is RNA-binding; the sequence is ANKIS. One can recognise an SF3 helicase domain in the interval 1204–1360; it reads KNKITNYMQF…STYTKNGKLN (157 aa). Cys1368, Cys1371, Cys1380, and Cys1385 together coordinate Zn(2+). Residues 1368–1385 form a C4-type zinc finger; sequence CKDCHQPSNFKKCCPLVC. The tract at residues 1412–1419 is RNA-binding; sequence DYKNKVKI. An oligomerization region spans residues 1423–1428; it reads LEVLFQ. An intramembrane segment occupies 1491–1506; it reads TILMFVSTLGIVYVIY. The Cytoplasmic portion of the chain corresponds to 1507 to 2178; it reads KLFAQTQGPY…VLRRRWLDLF (672 aa). Tyr1516 bears the O-(5'-phospho-RNA)-tyrosine mark. The region spanning 1537-1714 is the Peptidase C3 domain; sequence GPNTEFALSL…FSAQLKKQYF (178 aa). Catalysis depends on for protease 3C activity residues His1576, Glu1607, and Cys1682. Positions 1946-2059 constitute a RdRp catalytic domain; the sequence is HLMAFDYSNF…SYPFELDSNI (114 aa). Residues Asp1951 and Asp2045 each contribute to the Mg(2+) site.

The protein belongs to the picornaviruses polyprotein family. Interacts with capsid protein VP1 and capsid protein VP3 to form heterotrimeric protomers. In terms of assembly, interacts with capsid protein VP0, and capsid protein VP3 to form heterotrimeric protomers. Five protomers subsequently associate to form pentamers which serve as building blocks for the capsid. Interacts with capsid protein VP2, capsid protein VP3 and capsid protein VP4 following cleavage of capsid protein VP0. As to quaternary structure, interacts with capsid protein VP1 and capsid protein VP3 in the mature capsid. Interacts with capsid protein VP0 and capsid protein VP1 to form heterotrimeric protomers. Five protomers subsequently associate to form pentamers which serve as building blocks for the capsid. Interacts with capsid protein VP4 in the mature capsid. Interacts with protein 2C; this interaction may be important for virion morphogenesis. In terms of assembly, interacts with capsid protein VP1 and capsid protein VP3. As to quaternary structure, homodimer. Homohexamer; forms a hexameric ring structure with 6-fold symmetry characteristic of AAA+ ATPases. Interacts (via N-terminus) with host RTN3 (via reticulon domain); this interaction is important for viral replication. Interacts with capsid protein VP3; this interaction may be important for virion morphogenesis. In terms of assembly, interacts with protein 3CD. As to quaternary structure, homodimer. Interacts with host GBF1. Interacts (via GOLD domain) with host ACBD3 (via GOLD domain); this interaction allows the formation of a viral protein 3A/ACBD3 heterotetramer with a 2:2 stoichiometry, which will stimulate the recruitment of host PI4KB in order to synthesize PI4P at the viral RNA replication sites. Interacts with RNA-directed RNA polymerase. In terms of assembly, interacts with protein 3AB and with RNA-directed RNA polymerase. As to quaternary structure, interacts with Viral protein genome-linked and with protein 3CD. Mg(2+) is required as a cofactor. In terms of processing, specific enzymatic cleavages in vivo by the viral proteases yield processing intermediates and the mature proteins. Post-translationally, myristoylation is required for the formation of pentamers during virus assembly. Further assembly of 12 pentamers and a molecule of genomic RNA generates the provirion. During virion maturation, immature virions are rendered infectious following cleavage of VP0 into VP4 and VP2. This maturation seems to be an autocatalytic event triggered by the presence of RNA in the capsid and it is followed by a conformational change infectious virion. In terms of processing, myristoylation is required during RNA encapsidation and formation of the mature virus particle. Post-translationally, VPg is uridylylated by the polymerase into VPg-pUpU. This acts as a nucleotide-peptide primer for the genomic RNA replication.

Its subcellular location is the virion. It localises to the host cytoplasm. The protein resides in the host cytoplasmic vesicle membrane. It is found in the host nucleus. The catalysed reaction is a ribonucleoside 5'-triphosphate + H2O = a ribonucleoside 5'-diphosphate + phosphate + H(+). The enzyme catalyses Selective cleavage of Tyr-|-Gly bond in the picornavirus polyprotein.. It catalyses the reaction RNA(n) + a ribonucleoside 5'-triphosphate = RNA(n+1) + diphosphate. It carries out the reaction Selective cleavage of Gln-|-Gly bond in the poliovirus polyprotein. In other picornavirus reactions Glu may be substituted for Gln, and Ser or Thr for Gly.. Its activity is regulated as follows. Replication or transcription is subject to high level of random mutations by the nucleotide analog ribavirin. Forms an icosahedral capsid of pseudo T=3 symmetry with capsid proteins VP2 and VP3. The capsid is 300 Angstroms in diameter, composed of 60 copies of each capsid protein and enclosing the viral positive strand RNA genome. Capsid protein VP1 mainly forms the vertices of the capsid. Capsid protein VP1 interacts with host cell receptor to provide virion attachment to target host cells. This attachment induces virion internalization. Tyrosine kinases are probably involved in the entry process. After binding to its receptor, the capsid undergoes conformational changes. Capsid protein VP1 N-terminus (that contains an amphipathic alpha-helix) and capsid protein VP4 are externalized. Together, they shape a pore in the host membrane through which viral genome is translocated to host cell cytoplasm. Functionally, forms an icosahedral capsid of pseudo T=3 symmetry with capsid proteins VP2 and VP3. The capsid is 300 Angstroms in diameter, composed of 60 copies of each capsid protein and enclosing the viral positive strand RNA genome. Its function is as follows. Lies on the inner surface of the capsid shell. After binding to the host receptor, the capsid undergoes conformational changes. Capsid protein VP4 is released, Capsid protein VP1 N-terminus is externalized, and together, they shape a pore in the host membrane through which the viral genome is translocated into the host cell cytoplasm. In terms of biological role, component of immature procapsids, which is cleaved into capsid proteins VP4 and VP2 after maturation. Allows the capsid to remain inactive before the maturation step. Cysteine protease that cleaves viral polyprotein and specific host proteins. It is responsible for the autocatalytic cleavage between the P1 and P2 regions, which is the first cleavage occurring in the polyprotein. Also cleaves the host translation initiation factor EIF4G1, in order to shut down the capped cellular mRNA translation. Inhibits the host nucleus-cytoplasm protein and RNA trafficking by cleaving host members of the nuclear pores. Counteracts stress granule formation probably by antagonizing its assembly or promoting its dissassembly. Functionally, plays an essential role in the virus replication cycle by acting as a viroporin. Creates a pore in the host endoplasmic reticulum and as a consequence releases Ca2+ in the cytoplasm of infected cell. In turn, high levels of cytoplasmic calcium may trigger membrane trafficking and transport of viral ER-associated proteins to viroplasms, sites of viral genome replication. Its function is as follows. Induces and associates with structural rearrangements of intracellular membranes. Displays RNA-binding, nucleotide binding and NTPase activities. May play a role in virion morphogenesis and viral RNA encapsidation by interacting with the capsid protein VP3. In terms of biological role, localizes the viral replication complex to the surface of membranous vesicles. Together with protein 3CD binds the Cis-Active RNA Element (CRE) which is involved in RNA synthesis initiation. Acts as a cofactor to stimulate the activity of 3D polymerase, maybe through a nucleid acid chaperone activity. Localizes the viral replication complex to the surface of membranous vesicles. It inhibits host cell endoplasmic reticulum-to-Golgi apparatus transport and causes the disassembly of the Golgi complex, possibly through GBF1 interaction. This would result in depletion of MHC, trail receptors and IFN receptors at the host cell surface. Plays an essential role in viral RNA replication by recruiting ACBD3 and PI4KB at the viral replication sites, thereby allowing the formation of the rearranged membranous structures where viral replication takes place. Functionally, acts as a primer for viral RNA replication and remains covalently bound to viral genomic RNA. VPg is uridylylated prior to priming replication into VPg-pUpU. The oriI viral genomic sequence may act as a template for this. The VPg-pUpU is then used as primer on the genomic RNA poly(A) by the RNA-dependent RNA polymerase to replicate the viral genome. During genome replication, the VPg-RNA linkage is removed by the host TDP2, thereby accelerating replication. During the late stage of the replication cycle, host TDP2 is excluded from sites of viral RNA synthesis and encapsidation, allowing for the generation of progeny virions. Its function is as follows. Involved in the viral replication complex and viral polypeptide maturation. It exhibits protease activity with a specificity and catalytic efficiency that is different from protease 3C. Protein 3CD lacks polymerase activity. Protein 3CD binds to the 5'UTR of the viral genome. In terms of biological role, replicates the viral genomic RNA on the surface of intracellular membranes. May form linear arrays of subunits that propagate along a strong head-to-tail interaction called interface-I. Covalently attaches UMP to a tyrosine of VPg, which is used to prime RNA synthesis. The positive stranded RNA genome is first replicated at virus induced membranous vesicles, creating a dsRNA genomic replication form. This dsRNA is then used as template to synthesize positive stranded RNA genomes. ss(+)RNA genomes are either translated, replicated or encapsidated. Major viral protease that mediates proteolytic processing of the polyprotein. Cleaves host EIF5B, contributing to host translation shutoff. Also cleaves host PABPC1, contributing to host translation shutoff. Cleaves host NLRP1, triggers host N-glycine-mediated degradation of the autoinhibitory NLRP1 N-terminal fragment. This is Genome polyprotein from Homo sapiens (Human).